A 221-amino-acid chain; its full sequence is Thiopurine S-methyltransferase (221 aa).

W12, L47, E68, and R125 together coordinate S-adenosyl-L-methionine.

This sequence belongs to the class I-like SAM-binding methyltransferase superfamily. TPMT family.

It is found in the cytoplasm. The enzyme catalyses S-adenosyl-L-methionine + a thiopurine = S-adenosyl-L-homocysteine + a thiopurine S-methylether.. The polypeptide is Thiopurine S-methyltransferase (Legionella pneumophila (strain Paris)).